Consider the following 241-residue polypeptide: MORN repeat-containing protein 3 (241 aa).

Positions 6 to 35 (CPRKVEPPWKGWDRKAQKNGLRHQVFAVNG) are interaction with MDM2. MORN repeat units lie at residues 38-60 (YVGE…KSGA), 62-84 (YEGD…DPET), 91-113 (YSGW…PKEY), 114-136 (YEGE…NGDI), 137-159 (YEGQ…NGNR), 160-182 (YEGI…DHGQ), and 184-205 (FEGY…GRDE). The tract at residues 76-100 (SLSHPDPETGKLRRVYSGWWKGDKK) is interaction with SIRT1. The interval 206–240 (APEPTQFPIPKVEILDPDGVLKEALDKLMKPEEEE) is interaction with TP53.

In terms of assembly, interacts with MEIG1. Interacts with TP53, MDM2 and SIRT1; the interactions mediate post-transcriptional modifications of TP53 by MDM2 and SIRT1. In terms of tissue distribution, expressed in testis (at protein level).

It is found in the cytoplasmic vesicle. The protein localises to the secretory vesicle. Its subcellular location is the acrosome. Its function is as follows. Assembles a suppression complex (suppresome) by tethering SIRT1 and MDM2 to regulate composite modifications of p53/TP53. Confers both deacetylation-mediated functional inactivation, by SIRT1, and ubiquitination-dependent degradation, by MDM2, of p53/TP53, promoting a proliferative and cell survival behaviors. May play a role in the regulation of spermatogenesis. In Mus musculus (Mouse), this protein is MORN repeat-containing protein 3 (Morn3).